A 526-amino-acid chain; its full sequence is 2-isopropylmalate synthase (526 aa).

The 263-residue stretch at 5–267 folds into the Pyruvate carboxyltransferase domain; it reads VIIFDTTLRD…HTGIRHQEIY (263 aa). 4 residues coordinate Mn(2+): Asp14, His202, His204, and Asn238. A regulatory domain region spans residues 393–526; the sequence is RLEYFSVQSG…VPSISTSSTH (134 aa).

This sequence belongs to the alpha-IPM synthase/homocitrate synthase family. LeuA type 1 subfamily. As to quaternary structure, homodimer. Mn(2+) serves as cofactor.

The protein resides in the cytoplasm. The enzyme catalyses 3-methyl-2-oxobutanoate + acetyl-CoA + H2O = (2S)-2-isopropylmalate + CoA + H(+). The protein operates within amino-acid biosynthesis; L-leucine biosynthesis; L-leucine from 3-methyl-2-oxobutanoate: step 1/4. Its function is as follows. Catalyzes the condensation of the acetyl group of acetyl-CoA with 3-methyl-2-oxobutanoate (2-ketoisovalerate) to form 3-carboxy-3-hydroxy-4-methylpentanoate (2-isopropylmalate). In Edwardsiella ictaluri (strain 93-146), this protein is 2-isopropylmalate synthase.